Reading from the N-terminus, the 244-residue chain is Phosphoadenosine 5'-phosphosulfate reductase (244 aa).

Cys239 functions as the Nucleophile; cysteine thiosulfonate intermediate in the catalytic mechanism.

The protein belongs to the PAPS reductase family. CysH subfamily.

The protein resides in the cytoplasm. The enzyme catalyses [thioredoxin]-disulfide + sulfite + adenosine 3',5'-bisphosphate + 2 H(+) = [thioredoxin]-dithiol + 3'-phosphoadenylyl sulfate. Its pathway is sulfur metabolism; hydrogen sulfide biosynthesis; sulfite from sulfate: step 3/3. Functionally, catalyzes the formation of sulfite from phosphoadenosine 5'-phosphosulfate (PAPS) using thioredoxin as an electron donor. The polypeptide is Phosphoadenosine 5'-phosphosulfate reductase (Salmonella agona (strain SL483)).